The sequence spans 225 residues: Fibronectin type III domain-containing protein (225 aa).

An N-terminal signal peptide occupies residues 1–17 (MFSFGIILLTVVSFTNA). Residues 106-206 (PPTNVIVEST…MPLNVKTPDI (101 aa)) enclose the Fibronectin type-III domain.

In terms of tissue distribution, component of the organic matrix of calcified shell layers like nacre and prisms.

It is found in the secreted. In Mytilus californianus (California mussel), this protein is Fibronectin type III domain-containing protein.